Reading from the N-terminus, the 1211-residue chain is Periplasmic acid trehalase ATC1 (1211 aa).

The Cytoplasmic segment spans residues 1–46 (MKRIRSLWFNAEASYSNLNNSPSLRNKNSTGNNSRSKNYRSFSRFD). Residues 47-67 (LINSILLLMMLFLLAIFVTAL) traverse the membrane as a helical segment. At 68–1211 (YLTKSSRLTY…ATIKEIVLND (1144 aa)) the chain is on the periplasmic side. Residues 70–131 (TKSSRLTYSH…NTAYYDDENM (62 aa)) are required for cell surface targeting. Residues N98, N207, N238, N247, N255, N259, N325, N370, N376, and N488 are each glycosylated (N-linked (GlcNAc...) asparagine). 513-514 (WD) is a substrate binding site. Residues N539, N568, N628, and N638 are each glycosylated (N-linked (GlcNAc...) asparagine). E644 acts as the Proton donor in catalysis. Residues N696 and N705 are each glycosylated (N-linked (GlcNAc...) asparagine). 711-712 (KQ) lines the substrate pocket. 10 N-linked (GlcNAc...) asparagine glycosylation sites follow: N879, N897, N910, N972, N990, N1031, N1049, N1064, N1147, and N1157.

It belongs to the glycosyl hydrolase 65 family. Post-translationally, glycosylated.

The protein localises to the membrane. It localises to the vacuole lumen. It is found in the periplasm. It carries out the reaction alpha,alpha-trehalose + H2O = alpha-D-glucose + beta-D-glucose. Functionally, periplasmic acid trehalase that catalyzes hydrolysis of the disaccharide trehalose and required for growth on trehalose as carbon source. Growth on trehalose is strictly respiratory. In Saccharomyces cerevisiae (strain CEN.PK113-7D) (Baker's yeast), this protein is Periplasmic acid trehalase ATC1.